The following is a 299-amino-acid chain: SET domain-containing protein 9 (299 aa).

The SET domain maps to 122 to 295 (FSVAQATSSL…QGEELFSNYY (174 aa)). Tyr-294 lines the S-adenosyl-L-methionine pocket.

The protein belongs to the class V-like SAM-binding methyltransferase superfamily.

This Homo sapiens (Human) protein is SET domain-containing protein 9 (SETD9).